A 336-amino-acid chain; its full sequence is Tyrosine recombinase XerC (336 aa).

Residues 14 to 106 (VARCRWLEPF…SVKSFYRFLL (93 aa)) form the Core-binding (CB) domain. Residues 127 to 330 (KVPRFVSEEE…TFSRLKEIYD (204 aa)) enclose the Tyr recombinase domain. Active-site residues include R183, K207, H282, R285, and H308. Y317 serves as the catalytic O-(3'-phospho-DNA)-tyrosine intermediate.

This sequence belongs to the 'phage' integrase family. XerC subfamily. Forms a cyclic heterotetrameric complex composed of two molecules of XerC and two molecules of XerD.

Its subcellular location is the cytoplasm. Its function is as follows. Site-specific tyrosine recombinase, which acts by catalyzing the cutting and rejoining of the recombining DNA molecules. The XerC-XerD complex is essential to convert dimers of the bacterial chromosome into monomers to permit their segregation at cell division. It also contributes to the segregational stability of plasmids. The protein is Tyrosine recombinase XerC of Chlorobaculum parvum (strain DSM 263 / NCIMB 8327) (Chlorobium vibrioforme subsp. thiosulfatophilum).